The primary structure comprises 184 residues: Inner membrane-spanning protein YciB (184 aa).

5 helical membrane passes run 19 to 39 (LVGI…QLLI), 52 to 72 (LFMG…NQLE), 76 to 96 (WKVT…QYGF), 123 to 143 (LGWA…SQYL), and 151 to 171 (FKTF…GIYI).

This sequence belongs to the YciB family.

Its subcellular location is the cell inner membrane. In terms of biological role, plays a role in cell envelope biogenesis, maintenance of cell envelope integrity and membrane homeostasis. The chain is Inner membrane-spanning protein YciB from Pasteurella multocida (strain Pm70).